An 834-amino-acid polypeptide reads, in one-letter code: Protein SEY1 (834 aa).

The segment at 1-26 (MSNVPSPTVTLEGDSPDAAHEAVSSS) is disordered. Topologically, residues 1 to 733 (MSNVPSPTVT…KRSIMQHVTQ (733 aa)) are cytoplasmic. A GB1/RHD3-type G domain is found at 63-296 (PGDYRIISVF…SESFLFKPNY (234 aa)). Residue 73 to 80 (GSQSTGKS) participates in GTP binding. The stretch at 659–688 (VRDKKLKRQYETVREEKEAEEEDEDEWDSE) forms a coiled coil. The segment at 670–689 (TVREEKEAEEEDEDEWDSED) is disordered. Over residues 676–689 (EAEEEDEDEWDSED) the composition is skewed to acidic residues. A helical transmembrane segment spans residues 734 to 754 (IPYYIYIVILVLGWNEFMAIL). Topologically, residues 755-757 (RNP) are lumenal. A helical membrane pass occupies residues 758-778 (FFFTLLIMLAGATYVMYSMNL). Topologically, residues 779 to 834 (LGPASIVVQRMANEALGLAKEKLREFVVDDHMQHGHNMKKMTTNDIELDDLSEEST) are cytoplasmic.

Belongs to the TRAFAC class dynamin-like GTPase superfamily. GB1/RHD3 GTPase family. RHD3 subfamily.

The protein localises to the endoplasmic reticulum membrane. Functionally, cooperates with the reticulon proteins and tubule-shaping DP1 family proteins to generate and maintain the structure of the tubular endoplasmic reticulum network. Has GTPase activity, which is required for its function in ER organization. The sequence is that of Protein SEY1 from Clavispora lusitaniae (strain ATCC 42720) (Yeast).